Here is a 402-residue protein sequence, read N- to C-terminus: Dynactin subunit 2 (402 aa).

Residues 1–26 are disordered; sequence MADPKYADLPGIARNEPDVYETSDLP. Coiled-coil stretches lie at residues 101-132 and 357-402; these read PQQR…SAAE and VHLD…KRLQ.

The protein belongs to the dynactin subunit 2 family. As to quaternary structure, subunit of dynactin, a multiprotein complex part of a tripartite complex with dynein and a adapter, such as BICDL1, BICD2 or HOOK3. The dynactin complex is built around ACTR1A/ACTB filament and consists of an actin-related filament composed of a shoulder domain, a pointed end and a barbed end. Its length is defined by its flexible shoulder domain. The soulder is composed of 2 DCTN1 subunits, 4 DCTN2 and 2 DCTN3.

It localises to the cytoplasm. The protein resides in the cytoskeleton. Its subcellular location is the microtubule organizing center. The protein localises to the centrosome. It is found in the membrane. Functionally, part of the dynactin complex that activates the molecular motor dynein for ultra-processive transport along microtubules. In the dynactin soulder domain, binds the ACTR1A filament and acts as a molecular ruler to determine the length. Modulates cytoplasmic dynein binding to an organelle, and plays a role in prometaphase chromosome alignment and spindle organization during mitosis. Involved in anchoring microtubules to centrosomes. The chain is Dynactin subunit 2 (DCTN2) from Gallus gallus (Chicken).